A 104-amino-acid polypeptide reads, in one-letter code: MSETMIHVEVVYALPQKQRLIGLDVPDGTSMLDAAKLSGIGEQFADLDLDKAPMGVFGKVVANPAGHILKPGERVEIYRPLTADPKLNRKRRAKEKASAGKASN.

A disordered region spans residues 80 to 104 (PLTADPKLNRKRRAKEKASAGKASN).

The protein belongs to the UPF0125 (RnfH) family.

The chain is Protein RnfH from Alcanivorax borkumensis (strain ATCC 700651 / DSM 11573 / NCIMB 13689 / SK2).